A 97-amino-acid chain; its full sequence is Defensin-like protein 246 (97 aa).

An N-terminal signal peptide occupies residues 1–24 (MKFVAIFLVTCVLFSLFPSHLSQG). 4 disulfides stabilise this stretch: cysteine 39-cysteine 96, cysteine 50-cysteine 79, cysteine 58-cysteine 89, and cysteine 77-cysteine 91.

It belongs to the DEFL family. In terms of tissue distribution, flower buds and stems.

Its subcellular location is the secreted. In Arabidopsis thaliana (Mouse-ear cress), this protein is Defensin-like protein 246 (SCRL5).